The chain runs to 437 residues: Phosphomethylpyrimidine synthase (437 aa).

Substrate is bound by residues asparagine 69, methionine 98, tyrosine 127, histidine 163, 185–187 (SRG), 226–229 (DACR), and glutamate 265. Histidine 269 contributes to the Zn(2+) binding site. A substrate-binding site is contributed by tyrosine 292. Residue histidine 333 participates in Zn(2+) binding. Residues cysteine 409, cysteine 412, and cysteine 416 each contribute to the [4Fe-4S] cluster site.

It belongs to the ThiC family. Requires [4Fe-4S] cluster as cofactor.

The catalysed reaction is 5-amino-1-(5-phospho-beta-D-ribosyl)imidazole + S-adenosyl-L-methionine = 4-amino-2-methyl-5-(phosphooxymethyl)pyrimidine + CO + 5'-deoxyadenosine + formate + L-methionine + 3 H(+). It functions in the pathway cofactor biosynthesis; thiamine diphosphate biosynthesis. In terms of biological role, catalyzes the synthesis of the hydroxymethylpyrimidine phosphate (HMP-P) moiety of thiamine from aminoimidazole ribotide (AIR) in a radical S-adenosyl-L-methionine (SAM)-dependent reaction. The polypeptide is Phosphomethylpyrimidine synthase (Alkaliphilus metalliredigens (strain QYMF)).